The primary structure comprises 504 residues: Hydroxyisobutyraldehyde dehydrogenase (504 aa).

Glu260 acts as the Proton acceptor in catalysis. Cys294 acts as the Nucleophile in catalysis.

It belongs to the aldehyde dehydrogenase family.

Its subcellular location is the cytoplasm. It catalyses the reaction 2-hydroxy-2-methylpropanal + NAD(+) + H2O = 2-hydroxy-2-methylpropanoate + NADH + 2 H(+). Functionally, involved in the degradation of methyl tert-butyl ether (MTBE). Catalyzes the conversion of hydroxyisobutyraldehyde to hydroxyisobutyric acid (HIBA). This is Hydroxyisobutyraldehyde dehydrogenase from Mycolicibacterium austroafricanum (Mycobacterium austroafricanum).